Here is a 256-residue protein sequence, read N- to C-terminus: DNA repair protein RecO (256 aa).

It belongs to the RecO family.

Its function is as follows. Involved in DNA repair and RecF pathway recombination. This is DNA repair protein RecO from Streptococcus pneumoniae serotype 19F (strain G54).